The chain runs to 279 residues: Putative pyruvate, phosphate dikinase regulatory protein (279 aa).

157 to 164 (GVSRTSKT) serves as a coordination point for ADP.

It belongs to the pyruvate, phosphate/water dikinase regulatory protein family. PDRP subfamily.

The enzyme catalyses N(tele)-phospho-L-histidyl/L-threonyl-[pyruvate, phosphate dikinase] + ADP = N(tele)-phospho-L-histidyl/O-phospho-L-threonyl-[pyruvate, phosphate dikinase] + AMP + H(+). It catalyses the reaction N(tele)-phospho-L-histidyl/O-phospho-L-threonyl-[pyruvate, phosphate dikinase] + phosphate + H(+) = N(tele)-phospho-L-histidyl/L-threonyl-[pyruvate, phosphate dikinase] + diphosphate. Functionally, bifunctional serine/threonine kinase and phosphorylase involved in the regulation of the pyruvate, phosphate dikinase (PPDK) by catalyzing its phosphorylation/dephosphorylation. The chain is Putative pyruvate, phosphate dikinase regulatory protein from Lactobacillus helveticus (strain DPC 4571).